The primary structure comprises 76 residues: MEERIKEIIADQLGIDVEQIKPESKFVDDLGADSLDVVELIMAFEEEFDVEIPDEDAEKIQTVGDVINYIKEKKGE.

A Carrier domain is found at 1 to 74 (MEERIKEIIA…DVINYIKEKK (74 aa)). S34 is modified (O-(pantetheine 4'-phosphoryl)serine).

This sequence belongs to the acyl carrier protein (ACP) family. Post-translationally, 4'-phosphopantetheine is transferred from CoA to a specific serine of apo-ACP by AcpS. This modification is essential for activity because fatty acids are bound in thioester linkage to the sulfhydryl of the prosthetic group.

It is found in the cytoplasm. It functions in the pathway lipid metabolism; fatty acid biosynthesis. In terms of biological role, carrier of the growing fatty acid chain in fatty acid biosynthesis. The protein is Acyl carrier protein of Persephonella marina (strain DSM 14350 / EX-H1).